Reading from the N-terminus, the 355-residue chain is Hyaluronan and proteoglycan link protein 1 (355 aa).

A propeptide spanning residues 1–9 is cleaved from the precursor; the sequence is MTSLLFLVL. 2 N-linked (GlcNAc...) asparagine glycosylation sites follow: Asn-21 and Asn-56. The region spanning 38–156 is the Ig-like V-type domain; it reads PRLLVVAEQA…EDDTAVVALN (119 aa). 5 disulfides stabilise this stretch: Cys-61/Cys-140, Cys-182/Cys-253, Cys-206/Cys-227, Cys-280/Cys-350, and Cys-305/Cys-326. Link domains follow at residues 160–255 and 260–352; these read VVFP…FCFT and GRFY…YCFR.

Belongs to the HAPLN family.

Its subcellular location is the secreted. It is found in the extracellular space. The protein localises to the extracellular matrix. Functionally, stabilizes the aggregates of proteoglycan monomers with hyaluronic acid in the extracellular cartilage matrix. The chain is Hyaluronan and proteoglycan link protein 1 (HAPLN1) from Gallus gallus (Chicken).